The sequence spans 336 residues: Ethanol acetyltransferase 1 (336 aa).

A mitochondrion-targeting transit peptide spans 1–14; sequence MFPTRVLRSTLQKL. In terms of domain architecture, AB hydrolase-1 spans 44–296; it reads PIVFLHGIFG…VNSSHDILDQ (253 aa). Residues Ser117, Asp141, and His291 each act as charge relay system in the active site.

Belongs to the AB hydrolase superfamily.

It localises to the mitochondrion. The catalysed reaction is ethanol + acetyl-CoA = ethyl acetate + CoA. It carries out the reaction acetyl-CoA + H2O = acetate + CoA + H(+). The enzyme catalyses ethyl acetate + H2O = ethanol + acetate + H(+). Its function is as follows. Alcohol acetyltransferase that catalyzes the synthesis of ethyl acetate from ethanol and acetyl-CoA. Can also function as a thioesterase by hydrolyzing acetyl-CoA in the absence of ethanol, as well as esterase hydrolyzing ethyl acetate. This is Ethanol acetyltransferase 1 (EAT1) from Cyberlindnera jadinii (strain ATCC 18201 / CBS 1600 / BCRC 20928 / JCM 3617 / NBRC 0987 / NRRL Y-1542) (Torula yeast).